Here is a 226-residue protein sequence, read N- to C-terminus: Putative mitochondrial outer membrane protein porin 5 (226 aa).

The protein belongs to the eukaryotic mitochondrial porin (TC 1.B.8.1) family.

Its subcellular location is the mitochondrion outer membrane. In terms of biological role, putative channel that allows diffusion of small hydrophilic molecules through membranes. This is Putative mitochondrial outer membrane protein porin 5 (VDAC5) from Arabidopsis thaliana (Mouse-ear cress).